We begin with the raw amino-acid sequence, 413 residues long: Peptide chain release factor 1, mitochondrial (413 aa).

Residues 1–40 (MRVLIRPNFLSNLIRYCSRGTHSHDRSLRSVLSSNMIRLY) constitute a mitochondrion transit peptide. Gln287 is subject to N5-methylglutamine.

It belongs to the prokaryotic/mitochondrial release factor family. In terms of processing, methylation increases the termination efficiency of RF1. As to expression, mostly expressed in seedlings, stems and adult plants, and, to a lower extent, in siliques. Barely detected in etiolated seedlings and roots.

The protein resides in the mitochondrion. Functionally, peptide chain release factor 1 directs the termination of translation in response to the peptide chain termination codons UAG and UAA in mitochondria. This is Peptide chain release factor 1, mitochondrial from Arabidopsis thaliana (Mouse-ear cress).